Here is a 344-residue protein sequence, read N- to C-terminus: uncharacterized protein (344 aa).

Belongs to the glycosyltransferase 2 family.

This is an uncharacterized protein from Escherichia coli (strain K12).